The following is a 203-amino-acid chain: Thymidylate kinase (203 aa).

Residue 10-17 (GMDGAGKS) coordinates ATP.

It belongs to the thymidylate kinase family.

The enzyme catalyses dTMP + ATP = dTDP + ADP. Phosphorylation of dTMP to form dTDP in both de novo and salvage pathways of dTTP synthesis. The protein is Thymidylate kinase of Methylobacillus flagellatus (strain ATCC 51484 / DSM 6875 / VKM B-1610 / KT).